Here is a 177-residue protein sequence, read N- to C-terminus: Photosystem I assembly protein Ycf4 (177 aa).

A run of 2 helical transmembrane segments spans residues 20–40 (VALL…SSYF) and 60–80 (LVMG…WAVI).

This sequence belongs to the Ycf4 family.

It localises to the cellular thylakoid membrane. Functionally, seems to be required for the assembly of the photosystem I complex. This is Photosystem I assembly protein Ycf4 from Synechococcus sp. (strain RCC307).